A 121-amino-acid chain; its full sequence is UPF0231 protein ESA_03214 (121 aa).

This sequence belongs to the UPF0231 family.

This is UPF0231 protein ESA_03214 from Cronobacter sakazakii (strain ATCC BAA-894) (Enterobacter sakazakii).